The following is a 229-amino-acid chain: Large ribosomal subunit protein uL1 (229 aa).

It belongs to the universal ribosomal protein uL1 family. In terms of assembly, part of the 50S ribosomal subunit.

In terms of biological role, binds directly to 23S rRNA. The L1 stalk is quite mobile in the ribosome, and is involved in E site tRNA release. Protein L1 is also a translational repressor protein, it controls the translation of the L11 operon by binding to its mRNA. This is Large ribosomal subunit protein uL1 from Clostridium kluyveri (strain ATCC 8527 / DSM 555 / NBRC 12016 / NCIMB 10680 / K1).